The primary structure comprises 214 residues: Avenin (214 aa).

The N-terminal stretch at M1–Y28 is a signal peptide. Residues R180–E214 are disordered.

Its function is as follows. Seed storage protein. This chain is Avenin, found in Avena sativa (Oat).